A 347-amino-acid polypeptide reads, in one-letter code: S-adenosylmethionine:tRNA ribosyltransferase-isomerase (347 aa).

Belongs to the QueA family. As to quaternary structure, monomer.

It is found in the cytoplasm. The catalysed reaction is 7-aminomethyl-7-carbaguanosine(34) in tRNA + S-adenosyl-L-methionine = epoxyqueuosine(34) in tRNA + adenine + L-methionine + 2 H(+). Its pathway is tRNA modification; tRNA-queuosine biosynthesis. In terms of biological role, transfers and isomerizes the ribose moiety from AdoMet to the 7-aminomethyl group of 7-deazaguanine (preQ1-tRNA) to give epoxyqueuosine (oQ-tRNA). The polypeptide is S-adenosylmethionine:tRNA ribosyltransferase-isomerase (Exiguobacterium sibiricum (strain DSM 17290 / CCUG 55495 / CIP 109462 / JCM 13490 / 255-15)).